Reading from the N-terminus, the 214-residue chain is Glutathione S-transferase 1 (214 aa).

The GST N-terminal domain occupies 2–83; the sequence is APMKLYGAVM…YAARKNKPEL (82 aa). Glutathione is bound by residues S12, 41-42, 54-55, and 67-68; these read HK, QV, and ES. The 127-residue stretch at 88–214 folds into the GST C-terminal domain; the sequence is NLEEAAMVDV…KVAALMKPSA (127 aa).

It belongs to the GST superfamily. Phi family. As to quaternary structure, homodimer or heterodimer of GST-I and GST-IV (=GST-II). In terms of tissue distribution, expressed in the stem and leaves, lower levels are seen in the pollen and endosperm.

The catalysed reaction is RX + glutathione = an S-substituted glutathione + a halide anion + H(+). In terms of biological role, conjugation of reduced glutathione to a wide number of exogenous and endogenous hydrophobic electrophiles. Involved in the detoxification of certain herbicides. This is Glutathione S-transferase 1 (GST1) from Zea mays (Maize).